The sequence spans 869 residues: Probable beta-glucosidase F (869 aa).

An N-terminal signal peptide occupies residues 1 to 19; the sequence is MRVLSAIALVASLVPSALS. Residues asparagine 69, asparagine 77, and asparagine 261 are each glycosylated (N-linked (GlcNAc...) asparagine). The active site involves aspartate 289. N-linked (GlcNAc...) asparagine glycans are attached at residues asparagine 332, asparagine 364, asparagine 399, asparagine 425, and asparagine 478. Positions 678–698 are disordered; that stretch reads AYPPTRPPKGPTPTYPTTIPN. Pro residues predominate over residues 681–691; that stretch reads PTRPPKGPTPT. A glycan (N-linked (GlcNAc...) asparagine) is linked at asparagine 728.

Belongs to the glycosyl hydrolase 3 family.

The protein localises to the secreted. The enzyme catalyses Hydrolysis of terminal, non-reducing beta-D-glucosyl residues with release of beta-D-glucose.. The protein operates within glycan metabolism; cellulose degradation. Its function is as follows. Beta-glucosidases are one of a number of cellulolytic enzymes involved in the degradation of cellulosic biomass. Catalyzes the last step releasing glucose from the inhibitory cellobiose. This chain is Probable beta-glucosidase F (bglF), found in Neosartorya fischeri (strain ATCC 1020 / DSM 3700 / CBS 544.65 / FGSC A1164 / JCM 1740 / NRRL 181 / WB 181) (Aspergillus fischerianus).